The chain runs to 338 residues: Stage V sporulation protein AD (338 aa).

The protein is Stage V sporulation protein AD (spoVAD) of Bacillus subtilis (strain 168).